The primary structure comprises 371 residues: Pyruvate dehydrogenase E1 component subunit alpha (371 aa).

As to quaternary structure, heterodimer of an alpha and a beta chain. The cofactor is thiamine diphosphate.

It carries out the reaction N(6)-[(R)-lipoyl]-L-lysyl-[protein] + pyruvate + H(+) = N(6)-[(R)-S(8)-acetyldihydrolipoyl]-L-lysyl-[protein] + CO2. Its activity is regulated as follows. Activity of the E1 module is inhibited by the pyruvate dehydrogenase inhibitor PdhI. In terms of biological role, the pyruvate dehydrogenase complex catalyzes the overall conversion of pyruvate to acetyl-CoA and CO(2). It contains multiple copies of three enzymatic components: pyruvate dehydrogenase (E1), dihydrolipoamide acetyltransferase (E2) and lipoamide dehydrogenase (E3). Its function is as follows. The B.subtilis PDH complex also possesses branched-chain 2-oxoacid dehydrogenase (BCDH) activity. The polypeptide is Pyruvate dehydrogenase E1 component subunit alpha (Bacillus subtilis (strain 168)).